The primary structure comprises 160 residues: SsrA-binding protein (160 aa).

This sequence belongs to the SmpB family.

The protein resides in the cytoplasm. Its function is as follows. Required for rescue of stalled ribosomes mediated by trans-translation. Binds to transfer-messenger RNA (tmRNA), required for stable association of tmRNA with ribosomes. tmRNA and SmpB together mimic tRNA shape, replacing the anticodon stem-loop with SmpB. tmRNA is encoded by the ssrA gene; the 2 termini fold to resemble tRNA(Ala) and it encodes a 'tag peptide', a short internal open reading frame. During trans-translation Ala-aminoacylated tmRNA acts like a tRNA, entering the A-site of stalled ribosomes, displacing the stalled mRNA. The ribosome then switches to translate the ORF on the tmRNA; the nascent peptide is terminated with the 'tag peptide' encoded by the tmRNA and targeted for degradation. The ribosome is freed to recommence translation, which seems to be the essential function of trans-translation. This chain is SsrA-binding protein, found in Yersinia enterocolitica serotype O:8 / biotype 1B (strain NCTC 13174 / 8081).